Consider the following 306-residue polypeptide: Homeobox protein Hox-C13a (306 aa).

The segment at 68 to 90 (SVYSDISSPDTGRQCPAPQTSSS) is disordered. Positions 236-295 (GRKKRVPYTKLQLKELEKEYAASKFITKDKRRRISAATNLSERQVTIWFQNRRVKEKKFI) form a DNA-binding region, homeobox.

It belongs to the Abd-B homeobox family.

The protein resides in the nucleus. Its function is as follows. Sequence-specific transcription factor which is part of a developmental regulatory system that provides cells with specific positional identities on the anterior-posterior axis. The sequence is that of Homeobox protein Hox-C13a (hoxc13a) from Takifugu rubripes (Japanese pufferfish).